A 508-amino-acid chain; its full sequence is Photosystem II CP47 reaction center protein (508 aa).

Helical transmembrane passes span 21–36 (SVHI…WAGS), 101–115 (IVFS…IWHW), 140–156 (GIHL…FGAF), 203–218 (IAAG…FHLS), 237–252 (VLSS…AFVV), and 457–472 (SFAL…HGAR).

It belongs to the PsbB/PsbC family. PsbB subfamily. PSII is composed of 1 copy each of membrane proteins PsbA, PsbB, PsbC, PsbD, PsbE, PsbF, PsbH, PsbI, PsbJ, PsbK, PsbL, PsbM, PsbT, PsbX, PsbY, PsbZ, Psb30/Ycf12, at least 3 peripheral proteins of the oxygen-evolving complex and a large number of cofactors. It forms dimeric complexes. The cofactor is Binds multiple chlorophylls. PSII binds additional chlorophylls, carotenoids and specific lipids..

Its subcellular location is the plastid. The protein resides in the chloroplast thylakoid membrane. In terms of biological role, one of the components of the core complex of photosystem II (PSII). It binds chlorophyll and helps catalyze the primary light-induced photochemical processes of PSII. PSII is a light-driven water:plastoquinone oxidoreductase, using light energy to abstract electrons from H(2)O, generating O(2) and a proton gradient subsequently used for ATP formation. The protein is Photosystem II CP47 reaction center protein of Panax ginseng (Korean ginseng).